The following is an 85-amino-acid chain: MTDKIRSVQGKVVSDKMEKSFVVAIERKVKHPLYGKFIRRTTKLHVHDENNEAKVGDTVEIRECRPLSKTKSWTLVRVVEKAVIA.

This sequence belongs to the universal ribosomal protein uS17 family. As to quaternary structure, part of the 30S ribosomal subunit.

Its function is as follows. One of the primary rRNA binding proteins, it binds specifically to the 5'-end of 16S ribosomal RNA. This is Small ribosomal subunit protein uS17 from Haemophilus influenzae (strain 86-028NP).